The sequence spans 217 residues: Redox-sensing transcriptional repressor Rex (217 aa).

Positions 17–56 (RYLRYVEDLLNHDVLRISSSELSQRMGYTASQVRQDFNNF) form a DNA-binding region, H-T-H motif. 91–96 (GVGNLG) lines the NAD(+) pocket.

The protein belongs to the transcriptional regulatory Rex family. As to quaternary structure, homodimer.

The protein resides in the cytoplasm. Functionally, modulates transcription in response to changes in cellular NADH/NAD(+) redox state. This is Redox-sensing transcriptional repressor Rex from Caldicellulosiruptor bescii (strain ATCC BAA-1888 / DSM 6725 / KCTC 15123 / Z-1320) (Anaerocellum thermophilum).